Reading from the N-terminus, the 497-residue chain is Glycerol kinase (497 aa).

Residue T11 coordinates ADP. ATP is bound by residues T11, S12, and S13. T11 provides a ligand contact to sn-glycerol 3-phosphate. Residue R15 coordinates ADP. Sn-glycerol 3-phosphate contacts are provided by R81, E82, Y133, and D242. Glycerol is bound by residues R81, E82, Y133, D242, and Q243. T264 and G307 together coordinate ADP. Residues T264, G307, Q311, and G412 each coordinate ATP. G412 and N416 together coordinate ADP.

This sequence belongs to the FGGY kinase family.

It catalyses the reaction glycerol + ATP = sn-glycerol 3-phosphate + ADP + H(+). It functions in the pathway polyol metabolism; glycerol degradation via glycerol kinase pathway; sn-glycerol 3-phosphate from glycerol: step 1/1. With respect to regulation, inhibited by fructose 1,6-bisphosphate (FBP). Functionally, key enzyme in the regulation of glycerol uptake and metabolism. Catalyzes the phosphorylation of glycerol to yield sn-glycerol 3-phosphate. This chain is Glycerol kinase, found in Variovorax paradoxus (strain S110).